Consider the following 507-residue polypeptide: ATP synthase subunit alpha, plastid (507 aa).

170–177 (GDRQTGKT) lines the ATP pocket.

It belongs to the ATPase alpha/beta chains family. As to quaternary structure, F-type ATPases have 2 components, CF(1) - the catalytic core - and CF(0) - the membrane proton channel. CF(1) has five subunits: alpha(3), beta(3), gamma(1), delta(1), epsilon(1). CF(0) has four main subunits: a, b, b' and c.

The protein localises to the plastid membrane. The enzyme catalyses ATP + H2O + 4 H(+)(in) = ADP + phosphate + 5 H(+)(out). Functionally, produces ATP from ADP in the presence of a proton gradient across the membrane. The alpha chain is a regulatory subunit. In Aneura mirabilis (Parasitic liverwort), this protein is ATP synthase subunit alpha, plastid.